A 202-amino-acid polypeptide reads, in one-letter code: MIDFLKGRLVSVYPEAVVVEVGGIGYRVQVPPSLAASLPEPGETVFLYTYLSVKETALEMFGFSSELDRTAFLLLLGVAGIGPRTALAVVGRLGTRRLWAAILREDTGILTTVPGIGVKSARRIMVELRDRLEKQQVAVSAELPASDGVPVLAGRAENEALAALISLGYTPREAREALNRLPDRKLDAAGLVHAALRIMGSQ.

Positions Met-1–Ser-64 are domain I. Residues Ser-65–Leu-143 are domain II. A flexible linker region spans residues Pro-144–Leu-152. The segment at Leu-152 to Gln-202 is domain III.

It belongs to the RuvA family. As to quaternary structure, homotetramer. Forms an RuvA(8)-RuvB(12)-Holliday junction (HJ) complex. HJ DNA is sandwiched between 2 RuvA tetramers; dsDNA enters through RuvA and exits via RuvB. An RuvB hexamer assembles on each DNA strand where it exits the tetramer. Each RuvB hexamer is contacted by two RuvA subunits (via domain III) on 2 adjacent RuvB subunits; this complex drives branch migration. In the full resolvosome a probable DNA-RuvA(4)-RuvB(12)-RuvC(2) complex forms which resolves the HJ.

Its subcellular location is the cytoplasm. In terms of biological role, the RuvA-RuvB-RuvC complex processes Holliday junction (HJ) DNA during genetic recombination and DNA repair, while the RuvA-RuvB complex plays an important role in the rescue of blocked DNA replication forks via replication fork reversal (RFR). RuvA specifically binds to HJ cruciform DNA, conferring on it an open structure. The RuvB hexamer acts as an ATP-dependent pump, pulling dsDNA into and through the RuvAB complex. HJ branch migration allows RuvC to scan DNA until it finds its consensus sequence, where it cleaves and resolves the cruciform DNA. The chain is Holliday junction branch migration complex subunit RuvA from Desulforudis audaxviator (strain MP104C).